Consider the following 572-residue polypeptide: Urease subunit alpha (572 aa).

3 residues coordinate Ni(2+): H139, H141, and K222. K222 is modified (N6-carboxylysine). H224 provides a ligand contact to substrate. Ni(2+) contacts are provided by H251 and H277. H325 functions as the Proton donor in the catalytic mechanism. D365 contacts Ni(2+).

The protein belongs to the metallo-dependent hydrolases superfamily. Urease alpha subunit family. As to quaternary structure, heterotrimer of UreA (gamma), UreB (beta) and UreC (alpha) subunits. Three heterotrimers associate to form the active enzyme. Ni cation is required as a cofactor. In terms of processing, carboxylation allows a single lysine to coordinate two nickel ions.

The protein resides in the cytoplasm. It catalyses the reaction urea + 2 H2O + H(+) = hydrogencarbonate + 2 NH4(+). It participates in nitrogen metabolism; urea degradation; CO(2) and NH(3) from urea (urease route): step 1/1. This is Urease subunit alpha from Acetivibrio thermocellus (strain ATCC 27405 / DSM 1237 / JCM 9322 / NBRC 103400 / NCIMB 10682 / NRRL B-4536 / VPI 7372) (Clostridium thermocellum).